The chain runs to 338 residues: Ketol-acid reductoisomerase (NADP(+)) (338 aa).

Positions 1 to 181 (MNVYYDKDCD…GGGRSGIIET (181 aa)) constitute a KARI N-terminal Rossmann domain. Residues 24-27 (YGSQ), Arg-47, Ser-50, Ser-52, and 82-85 (DEFQ) contribute to the NADP(+) site. His-107 is an active-site residue. Gly-133 contacts NADP(+). Residues 182–327 (TFKDETETDL…AKLRGMMPWI (146 aa)) form the KARI C-terminal knotted domain. Asp-190, Glu-194, Glu-226, and Glu-230 together coordinate Mg(2+). Residue Ser-251 participates in substrate binding.

The protein belongs to the ketol-acid reductoisomerase family. Mg(2+) is required as a cofactor.

It carries out the reaction (2R)-2,3-dihydroxy-3-methylbutanoate + NADP(+) = (2S)-2-acetolactate + NADPH + H(+). It catalyses the reaction (2R,3R)-2,3-dihydroxy-3-methylpentanoate + NADP(+) = (S)-2-ethyl-2-hydroxy-3-oxobutanoate + NADPH + H(+). The protein operates within amino-acid biosynthesis; L-isoleucine biosynthesis; L-isoleucine from 2-oxobutanoate: step 2/4. It participates in amino-acid biosynthesis; L-valine biosynthesis; L-valine from pyruvate: step 2/4. Functionally, involved in the biosynthesis of branched-chain amino acids (BCAA). Catalyzes an alkyl-migration followed by a ketol-acid reduction of (S)-2-acetolactate (S2AL) to yield (R)-2,3-dihydroxy-isovalerate. In the isomerase reaction, S2AL is rearranged via a Mg-dependent methyl migration to produce 3-hydroxy-3-methyl-2-ketobutyrate (HMKB). In the reductase reaction, this 2-ketoacid undergoes a metal-dependent reduction by NADPH to yield (R)-2,3-dihydroxy-isovalerate. The polypeptide is Ketol-acid reductoisomerase (NADP(+)) (Psychrobacter cryohalolentis (strain ATCC BAA-1226 / DSM 17306 / VKM B-2378 / K5)).